The primary structure comprises 256 residues: Biosynthetic peptidoglycan transglycosylase (256 aa).

The chain crosses the membrane as a helical span at residues 26–48 (VARWLAYVGGVFAGAWLATQLYY).

This sequence belongs to the glycosyltransferase 51 family.

Its subcellular location is the cell inner membrane. The enzyme catalyses [GlcNAc-(1-&gt;4)-Mur2Ac(oyl-L-Ala-gamma-D-Glu-L-Lys-D-Ala-D-Ala)](n)-di-trans,octa-cis-undecaprenyl diphosphate + beta-D-GlcNAc-(1-&gt;4)-Mur2Ac(oyl-L-Ala-gamma-D-Glu-L-Lys-D-Ala-D-Ala)-di-trans,octa-cis-undecaprenyl diphosphate = [GlcNAc-(1-&gt;4)-Mur2Ac(oyl-L-Ala-gamma-D-Glu-L-Lys-D-Ala-D-Ala)](n+1)-di-trans,octa-cis-undecaprenyl diphosphate + di-trans,octa-cis-undecaprenyl diphosphate + H(+). It participates in cell wall biogenesis; peptidoglycan biosynthesis. Functionally, peptidoglycan polymerase that catalyzes glycan chain elongation from lipid-linked precursors. The polypeptide is Biosynthetic peptidoglycan transglycosylase (Burkholderia pseudomallei (strain K96243)).